The sequence spans 397 residues: Acetate kinase (397 aa).

Residue N7 coordinates Mg(2+). Residue K14 participates in ATP binding. Substrate is bound at residue R88. Residue D145 is the Proton donor/acceptor of the active site. ATP contacts are provided by residues 205-209 (HLGNG), 279-281 (DMR), and 326-330 (GIGEN). E380 contributes to the Mg(2+) binding site.

The protein belongs to the acetokinase family. In terms of assembly, homodimer. It depends on Mg(2+) as a cofactor. The cofactor is Mn(2+).

Its subcellular location is the cytoplasm. It catalyses the reaction acetate + ATP = acetyl phosphate + ADP. It participates in metabolic intermediate biosynthesis; acetyl-CoA biosynthesis; acetyl-CoA from acetate: step 1/2. In terms of biological role, catalyzes the formation of acetyl phosphate from acetate and ATP. Can also catalyze the reverse reaction. This is Acetate kinase from Campylobacter concisus (strain 13826).